The primary structure comprises 247 residues: UPF0659 protein C216.03 (247 aa).

The protein belongs to the UPF0659 family.

The protein resides in the cytoplasm. Its subcellular location is the nucleus. This chain is UPF0659 protein C216.03, found in Schizosaccharomyces pombe (strain 972 / ATCC 24843) (Fission yeast).